Reading from the N-terminus, the 121-residue chain is Pro-glucagon (121 aa).

An N-terminal signal peptide occupies residues 1–21 (MKGAQYLAGLLLLLFVQNSIC). A propeptide spanning residues 80–85 (SNGGSA) is cleaved from the precursor.

It belongs to the glucagon family.

The protein localises to the secreted. Plays a key role in glucose metabolism and homeostasis. Regulates blood glucose by increasing gluconeogenesis and decreasing glycolysis. This is Pro-glucagon (gcg) from Carassius auratus (Goldfish).